The chain runs to 198 residues: Holliday junction branch migration complex subunit RuvA (198 aa).

A domain I region spans residues 1-63; sequence MYDYIKGQLT…EDAHLLFGFH (63 aa). Residues 64 to 142 form a domain II region; the sequence is TEDEKDVFLK…EAPQETGHTK (79 aa). The interval 143 to 147 is flexible linker; sequence ARSNK. The segment at 148-198 is domain III; the sequence is AGNTQLDEAIEALLALGYKATELKKIRAFFEGTSETAEQYIKSALKLLMKG.

This sequence belongs to the RuvA family. Homotetramer. Forms an RuvA(8)-RuvB(12)-Holliday junction (HJ) complex. HJ DNA is sandwiched between 2 RuvA tetramers; dsDNA enters through RuvA and exits via RuvB. An RuvB hexamer assembles on each DNA strand where it exits the tetramer. Each RuvB hexamer is contacted by two RuvA subunits (via domain III) on 2 adjacent RuvB subunits; this complex drives branch migration. In the full resolvosome a probable DNA-RuvA(4)-RuvB(12)-RuvC(2) complex forms which resolves the HJ.

The protein resides in the cytoplasm. The RuvA-RuvB-RuvC complex processes Holliday junction (HJ) DNA during genetic recombination and DNA repair, while the RuvA-RuvB complex plays an important role in the rescue of blocked DNA replication forks via replication fork reversal (RFR). RuvA specifically binds to HJ cruciform DNA, conferring on it an open structure. The RuvB hexamer acts as an ATP-dependent pump, pulling dsDNA into and through the RuvAB complex. HJ branch migration allows RuvC to scan DNA until it finds its consensus sequence, where it cleaves and resolves the cruciform DNA. The protein is Holliday junction branch migration complex subunit RuvA of Streptococcus pyogenes serotype M6 (strain ATCC BAA-946 / MGAS10394).